A 471-amino-acid chain; its full sequence is Heparan-sulfate 6-O-sulfotransferase 3 (471 aa).

At 1–4 (MDER) the chain is on the cytoplasmic side. The helical; Signal-anchor for type II membrane protein transmembrane segment at 5–27 (FNKWLLTPVLTLLFVVIMYQYVS) threads the bilayer. Residues 28–471 (PSCTSSCTNF…EDYNSQVVRW (444 aa)) are Lumenal-facing. A disordered region spans residues 39 to 122 (EQPRAGEAGP…EAPENGSLPR (84 aa)). Over residues 41–62 (PRAGEAGPPAVPGPARRAQAPP) the composition is skewed to low complexity. The span at 70-81 (QLPPPPRGPPEG) shows a compositional bias: pro residues. Acidic residues predominate over residues 88-114 (PEEEDEEPGDPREGEEEEEEDEPDPEA). Residues Asn117 and Asn128 are each glycosylated (N-linked (GlcNAc...) asparagine). 152-160 (HIQKTGGTT) lines the 3'-phosphoadenylyl sulfate pocket. Substrate contacts are provided by residues 182-183 (KK), Arg199, Trp204, and His209. Catalysis depends on His209, which acts as the Proton acceptor. Asn231 is a glycosylation site (N-linked (GlcNAc...) asparagine). Residues Arg245 and Ser253 each coordinate 3'-phosphoadenylyl sulfate. The substrate site is built by His257 and Trp264. N-linked (GlcNAc...) asparagine glycans are attached at residues Asn324 and Asn329. Residue 377–379 (TQF) coordinates 3'-phosphoadenylyl sulfate. N-linked (GlcNAc...) asparagine glycosylation is present at Asn380. 383-384 (RA) contributes to the 3'-phosphoadenylyl sulfate binding site. The disordered stretch occupies residues 422–471 (TKQLEHQRDRQKRREERRLQREHRDHQWPKEDGAAEGTVTEDYNSQVVRW). A compositionally biased stretch (basic and acidic residues) spans 423–454 (KQLEHQRDRQKRREERRLQREHRDHQWPKEDG). Residues 462–471 (EDYNSQVVRW) show a composition bias toward polar residues.

This sequence belongs to the sulfotransferase 6 family.

It localises to the membrane. The enzyme catalyses alpha-D-glucosaminyl-[heparan sulfate](n) + 3'-phosphoadenylyl sulfate = 6-sulfo-alpha-D-glucosaminyl-[heparan sulfate](n) + adenosine 3',5'-bisphosphate + H(+). Functionally, 6-O-sulfation enzyme which catalyzes the transfer of sulfate from 3'-phosphoadenosine 5'-phosphosulfate (PAPS) to position 6 of the N-sulfoglucosamine residue (GlcNS) of heparan sulfate. This chain is Heparan-sulfate 6-O-sulfotransferase 3 (HS6ST3), found in Homo sapiens (Human).